Here is a 580-residue protein sequence, read N- to C-terminus: Adenine deaminase (580 aa).

This sequence belongs to the metallo-dependent hydrolases superfamily. Adenine deaminase family. It depends on Mn(2+) as a cofactor.

The catalysed reaction is adenine + H2O + H(+) = hypoxanthine + NH4(+). This Listeria monocytogenes serovar 1/2a (strain ATCC BAA-679 / EGD-e) protein is Adenine deaminase.